Here is a 235-residue protein sequence, read N- to C-terminus: Ribonuclease 3 (235 aa).

The 130-residue stretch at 8–137 (PAELARRIGI…VIGAIFLSGG (130 aa)) folds into the RNase III domain. Glutamate 50 provides a ligand contact to Mg(2+). Aspartate 54 is a catalytic residue. Mg(2+) contacts are provided by aspartate 123 and glutamate 126. Residue glutamate 126 is part of the active site. The 70-residue stretch at 163–232 (DNKTAFQEWV…AGRAMREWAG (70 aa)) folds into the DRBM domain. The segment at 211–235 (QGRTKKEAEQQAAGRAMREWAGRKG) is disordered. A compositionally biased stretch (basic and acidic residues) spans 226–235 (AMREWAGRKG).

This sequence belongs to the ribonuclease III family. As to quaternary structure, homodimer. Requires Mg(2+) as cofactor.

Its subcellular location is the cytoplasm. It carries out the reaction Endonucleolytic cleavage to 5'-phosphomonoester.. Functionally, digests double-stranded RNA. Involved in the processing of primary rRNA transcript to yield the immediate precursors to the large and small rRNAs (23S and 16S). Processes some mRNAs, and tRNAs when they are encoded in the rRNA operon. Processes pre-crRNA and tracrRNA of type II CRISPR loci if present in the organism. This is Ribonuclease 3 from Heliobacterium modesticaldum (strain ATCC 51547 / Ice1).